The sequence spans 279 residues: Energy-coupling factor transporter ATP-binding protein EcfA1 (279 aa).

The ABC transporter domain occupies 5–240 (IELKKVTFNY…GDELLQLGLD (236 aa)). ATP is bound at residue 40–47 (GHNGSGKS).

The protein belongs to the ABC transporter superfamily. Energy-coupling factor EcfA family. As to quaternary structure, forms a stable energy-coupling factor (ECF) transporter complex composed of 2 membrane-embedded substrate-binding proteins (S component), 2 ATP-binding proteins (A component) and 2 transmembrane proteins (T component).

Its subcellular location is the cell membrane. Its function is as follows. ATP-binding (A) component of a common energy-coupling factor (ECF) ABC-transporter complex. Unlike classic ABC transporters this ECF transporter provides the energy necessary to transport a number of different substrates. The sequence is that of Energy-coupling factor transporter ATP-binding protein EcfA1 from Streptococcus pyogenes serotype M12 (strain MGAS2096).